The following is a 301-amino-acid chain: Recombination-associated protein RdgC (301 aa).

This sequence belongs to the RdgC family.

It is found in the cytoplasm. Its subcellular location is the nucleoid. May be involved in recombination. The protein is Recombination-associated protein RdgC of Xanthomonas oryzae pv. oryzae (strain MAFF 311018).